The chain runs to 198 residues: MAKATTIKDAIRIFEERKSVVATEAEKVELHGMIPPIEKMDATLSTLKACKHLALSTNNIEKISSLSGMENLRILSLGRNLIKKIENLDAVADTLEELWISYNQIASLSGIEKLVNLRVLYMSNNKITNWGEIDKLAALDKLEDLLLAGNPLYNDYKENNATSEYRIEVVKRLPNLKKLDGMPVDVDEREQANVARGG.

LRR repeat units follow at residues 49-70 (ACKH…SGME), 71-92 (NLRI…DAVA), 94-115 (TLEE…EKLV), and 116-137 (NLRV…DKLA). An LRRCT domain is found at 157 to 195 (KENNATSEYRIEVVKRLPNLKKLDGMPVDVDEREQANVA).

This sequence belongs to the dynein light chain LC1-type family. In terms of assembly, interacts with OCAD2, a outer arm dynein heavy chain. Interacts with tubulin (previously called p45) located within the A-tubule of the outer doublets in a ATP-independent manner.

It is found in the cytoplasm. The protein localises to the cytoskeleton. Its subcellular location is the flagellum axoneme. Its function is as follows. Part of the multisubunit axonemal ATPase complexes that generate the force for flagellar motility and govern beat frequency. Component of the outer arm dynein (ODA). May be involved in a mechanosensory feedback mechanism controlling ODA activity based on external conformational cues by tethering the outer arm dynein heavy chain (ODA2) to the A-tubule of the outer doublet microtubules within the axoneme. This chain is Dynein axonemal light chain 1, found in Chlamydomonas reinhardtii (Chlamydomonas smithii).